The following is a 202-amino-acid chain: GTP cyclohydrolase 1 (202 aa).

Zn(2+) is bound by residues C90, H93, and C163.

The protein belongs to the GTP cyclohydrolase I family. As to quaternary structure, homomer.

The enzyme catalyses GTP + H2O = 7,8-dihydroneopterin 3'-triphosphate + formate + H(+). It participates in cofactor biosynthesis; 7,8-dihydroneopterin triphosphate biosynthesis; 7,8-dihydroneopterin triphosphate from GTP: step 1/1. The protein is GTP cyclohydrolase 1 of Mycobacterium ulcerans (strain Agy99).